Here is a 25-residue protein sequence, read N- to C-terminus: Small ribosomal subunit protein eS32 (25 aa).

Residues Met1–Lys25 form a disordered region.

Belongs to the eukaryotic ribosomal protein eS32 family. In terms of assembly, component of the small ribosomal subunit. Mature ribosomes consist of a small (40S) and a large (60S) subunit. The 40S subunit contains about 32 different proteins and 1 molecule of RNA (18S). The 60S subunit contains 45 different proteins and 3 molecules of RNA (25S, 5.8S and 5S).

Its subcellular location is the cytoplasm. In terms of biological role, component of the ribosome, a large ribonucleoprotein complex responsible for the synthesis of proteins in the cell. The small ribosomal subunit (SSU) binds messenger RNAs (mRNAs) and translates the encoded message by selecting cognate aminoacyl-transfer RNA (tRNA) molecules. The large subunit (LSU) contains the ribosomal catalytic site termed the peptidyl transferase center (PTC), which catalyzes the formation of peptide bonds, thereby polymerizing the amino acids delivered by tRNAs into a polypeptide chain. The nascent polypeptides leave the ribosome through a tunnel in the LSU and interact with protein factors that function in enzymatic processing, targeting, and the membrane insertion of nascent chains at the exit of the ribosomal tunnel. The chain is Small ribosomal subunit protein eS32 from Candida albicans (strain SC5314 / ATCC MYA-2876) (Yeast).